We begin with the raw amino-acid sequence, 1010 residues long: Sodium/potassium-transporting ATPase subunit alpha-3 (1010 aa).

Residues 1 to 21 (MGDKGEKESPKKGKGKRDLDD) are disordered. The Cytoplasmic segment spans residues 1–74 (MGDKGEKESP…NALTPPPTTP (74 aa)). The interaction with phosphoinositide-3 kinase stretch occupies residues 69-71 (PPP). Residues 75-95 (EWVKFCRQLFGGFSILLWIGA) form a helical membrane-spanning segment. Residues 96 to 118 (ILCFLAYGIQAGTEDEPSNDNLY) lie on the Extracellular side of the membrane. Residues 119–139 (LGIVLAAVVIITGCFSYYQEA) traverse the membrane as a helical segment. The Cytoplasmic portion of the chain corresponds to 140–275 (KSSKIMESFK…VGKTPIAVEI (136 aa)). A helical transmembrane segment spans residues 276–295 (EHFIQLITGVAVFLGISFFV). Over 296 to 307 (LSLILGYTWLEA) the chain is Extracellular. The chain crosses the membrane as a helical span at residues 308–325 (VIFLIGIIVANVPEGLLA). Topologically, residues 326-759 (TVTVCLTLTA…EEGRLIFDNL (434 aa)) are cytoplasmic. Asp-363 (4-aspartylphosphate intermediate) is an active-site residue. Asp-704 and Asp-708 together coordinate Mg(2+). A helical transmembrane segment spans residues 760-779 (KKSIAYTLTSNIPEITPFLL). The Extracellular portion of the chain corresponds to 780–789 (FIMANIPLPL). Residues 790–810 (GTITILCIDLGTDMVPAISLA) form a helical membrane-spanning segment. Over 811-830 (YEAAESDIMKRQPRNPRSDK) the chain is Cytoplasmic. A helical transmembrane segment spans residues 831 to 853 (LVNERLISMAYGQIGMIQALGGF). The Extracellular portion of the chain corresponds to 854 to 905 (FSYFVILAENGFLPSCLVGIRLSWDDRTINDLEDSYGQQWTYEQRKVVEFTC). The helical transmembrane segment at 906–925 (HTAFFVSIVVVQWADLIICK) threads the bilayer. Over 926–938 (TRRNSVFQQGMKN) the chain is Cytoplasmic. Ser-930 is modified (phosphoserine; by PKA). A helical membrane pass occupies residues 939-957 (KILIFGLFEETALAAFLSY). The Extracellular portion of the chain corresponds to 958 to 972 (CPGMDVALRMYPLKP). The helical transmembrane segment at 973 to 993 (SWWFCAFPYSFLIFVYDEIRK) threads the bilayer. The Cytoplasmic portion of the chain corresponds to 994–1010 (LILRRNPGGWVEKETYY).

It belongs to the cation transport ATPase (P-type) (TC 3.A.3) family. Type IIC subfamily. As to quaternary structure, the sodium/potassium-transporting ATPase is composed of a catalytic alpha subunit, an auxiliary non-catalytic beta subunit and an additional regulatory subunit.

It is found in the cell membrane. It catalyses the reaction K(+)(out) + Na(+)(in) + ATP + H2O = K(+)(in) + Na(+)(out) + ADP + phosphate + H(+). This is the catalytic component of the active enzyme, which catalyzes the hydrolysis of ATP coupled with the exchange of sodium and potassium ions across the plasma membrane. This action creates the electrochemical gradient of sodium and potassium ions, providing the energy for active transport of various nutrients. The polypeptide is Sodium/potassium-transporting ATPase subunit alpha-3 (ATP1A3) (Gallus gallus (Chicken)).